Here is a 288-residue protein sequence, read N- to C-terminus: Prepilin leader peptidase/N-methyltransferase (288 aa).

A helical transmembrane segment spans residues 14–34 (FITLATVLGLLVGSFLNVVVY). Cysteine 71, cysteine 74, cysteine 96, and cysteine 99 together coordinate Zn(2+). 6 consecutive transmembrane segments (helical) span residues 103–123 (ISVR…VVAW), 127–147 (ASVE…LSLI), 158–178 (IVLP…WVPL), 182–202 (VCGA…FKLV), 227–247 (VLPL…VYLL), and 254–274 (MGTA…AVLW).

The protein belongs to the peptidase A24 family. It depends on Zn(2+) as a cofactor.

It is found in the cell inner membrane. It catalyses the reaction Typically cleaves a -Gly-|-Phe- bond to release an N-terminal, basic peptide of 5-8 residues from type IV prepilin, and then N-methylates the new N-terminal amino group, the methyl donor being S-adenosyl-L-methionine.. Its function is as follows. Plays an essential role in type IV pili and type II pseudopili formation by proteolytically removing the leader sequence from substrate proteins and subsequently monomethylating the alpha-amino group of the newly exposed N-terminal phenylalanine. The protein is Prepilin leader peptidase/N-methyltransferase (pilD) of Pseudomonas putida (Arthrobacter siderocapsulatus).